The chain runs to 401 residues: Splicing factor 45 (401 aa).

Residue S2 is modified to N-acetylserine. At S2 the chain carries Phosphoserine. A Glycyl lysine isopeptide (Lys-Gly) (interchain with G-Cter in SUMO2) cross-link involves residue K15. Position 21 is an N6-acetyllysine (K21). Glycyl lysine isopeptide (Lys-Gly) (interchain with G-Cter in SUMO2) cross-links involve residues K24 and K33. Position 41 is an N6-acetyllysine; alternate (K41). Residue K41 forms a Glycyl lysine isopeptide (Lys-Gly) (interchain with G-Cter in SUMO2); alternate linkage. Residues L57–I68 show a composition bias toward basic and acidic residues. Disordered regions lie at residues L57–P84 and R114–N233. K58 participates in a covalent cross-link: Glycyl lysine isopeptide (Lys-Gly) (interchain with G-Cter in SUMO2). Position 71 is a phosphothreonine (T71). Over residues R114–P153 the composition is skewed to basic and acidic residues. S155 and S169 each carry phosphoserine. Over residues V182–P200 the composition is skewed to basic and acidic residues. A Phosphoserine modification is found at S222. In terms of domain architecture, G-patch spans G235 to T283. At T237 the chain carries Phosphothreonine. Residue K256 forms a Glycyl lysine isopeptide (Lys-Gly) (interchain with G-Cter in SUMO2) linkage. S266 is subject to Phosphoserine. A Glycyl lysine isopeptide (Lys-Gly) (interchain with G-Cter in SUMO2) cross-link involves residue K276. Phosphoserine is present on residues S291 and S293. The region spanning V306 to C385 is the RRM domain.

As to quaternary structure, binds SXL. Associates with the spliceosome. Interacts with SF3B1, SF1 and U2AF2.

It localises to the nucleus. In terms of biological role, splice factor that binds to the single-stranded 3'AG at the exon/intron border and promotes its utilization in the second catalytic step. Involved in the regulation of alternative splicing and the utilization of cryptic splice sites. Promotes the utilization of a cryptic splice site created by the beta-110 mutation in the HBB gene. The resulting frameshift leads to sickle cell anemia. In Homo sapiens (Human), this protein is Splicing factor 45 (RBM17).